A 327-amino-acid polypeptide reads, in one-letter code: Gonadotropin-releasing hormone receptor (327 aa).

Residues 1 to 37 lie on the Extracellular side of the membrane; it reads MASASPEQNQNHCSAVNNSNMLMQGNLPTLTLSGKIR. Asparagine 17 is a glycosylation site (N-linked (GlcNAc...) asparagine). The helical transmembrane segment at 38 to 57 threads the bilayer; it reads VTVTFFLFLLSTIFNASFLL. Residues 58-76 are Cytoplasmic-facing; the sequence is KLQKWTQKKEKGKKLSRMK. Residues 77 to 96 form a helical membrane-spanning segment; the sequence is VLLKHLTLANLLETLIVMPL. Over 97-114 the chain is Extracellular; that stretch reads DGMWNITVQWYAGEFLCK. Asparagine 101 is a glycosylation site (N-linked (GlcNAc...) asparagine). A disulfide bridge connects residues cysteine 113 and cysteine 195. The chain crosses the membrane as a helical span at residues 115-136; sequence VLSYLKLFSMYAPAFMMVVISL. The Cytoplasmic segment spans residues 137–163; it reads DRSLAITRPLAMKNNGKLGQSMIGLAW. A helical transmembrane segment spans residues 164-183; the sequence is LLSGIFAGPQLYIFRMIHLA. Over 184–211 the chain is Extracellular; sequence DSSGQTEGFPQCVTHCSFPQWWHQAFYN. The helical transmembrane segment at 212–231 threads the bilayer; it reads FFTFSCLFIIPLFITLICNA. At 232-280 the chain is on the cytoplasmic side; sequence KIIFTLTRVLHQDPHELQLNQSKNNIPRARLRTLKMTVAFATSFTVCWT. The chain crosses the membrane as a helical span at residues 281–299; it reads PYYVLGIWYWFDPEMLNRV. The Extracellular segment spans residues 300-305; it reads SDPVNH. A helical membrane pass occupies residues 306–325; sequence FFFLFALLNPCFDPLIYGYF. Over 326–327 the chain is Cytoplasmic; it reads SL.

It belongs to the G-protein coupled receptor 1 family.

It localises to the cell membrane. In terms of biological role, receptor for gonadotropin releasing hormone (GnRH) that mediates the action of GnRH to stimulate the secretion of the gonadotropic hormones luteinizing hormone (LH) and follicle-stimulating hormone (FSH). This receptor mediates its action by association with G-proteins that activate a phosphatidylinositol-calcium second messenger system. This Canis lupus familiaris (Dog) protein is Gonadotropin-releasing hormone receptor (GNRHR).